We begin with the raw amino-acid sequence, 104 residues long: ESAT-6-like protein (104 aa).

A coiled-coil region spans residues 12–43; it reads MAQAAQDIEQSANAIRGMQNQLASAKDQLRSH.

The protein belongs to the WXG100 family. CFP-10 subfamily. As to quaternary structure, in isolation forms a homodimer. Forms a tight 1:1 complex with EsxA. Forms a complex with EsxA and EccC, probably wholly mediated by EsxB; binds in a pocket in the third FtsK (ATPase) domain of EccC (residues 1163-1208).

Its subcellular location is the secreted. Functionally, may help regulate assembly and function of the type VII secretion system (T7SS). Binds to EccC and induces its multimerization. May serve as a chaperone for EsxA. The protein is ESAT-6-like protein of Thermomonospora curvata (strain ATCC 19995 / DSM 43183 / JCM 3096 / KCTC 9072 / NBRC 15933 / NCIMB 10081 / Henssen B9).